The primary structure comprises 206 residues: Urease accessory protein UreG (206 aa).

Position 14–21 (14–21 (GPVGSGKT)) interacts with GTP.

This sequence belongs to the SIMIBI class G3E GTPase family. UreG subfamily. Homodimer. UreD, UreF and UreG form a complex that acts as a GTP-hydrolysis-dependent molecular chaperone, activating the urease apoprotein by helping to assemble the nickel containing metallocenter of UreC. The UreE protein probably delivers the nickel.

Its subcellular location is the cytoplasm. Functionally, facilitates the functional incorporation of the urease nickel metallocenter. This process requires GTP hydrolysis, probably effectuated by UreG. This Aliivibrio fischeri (strain ATCC 700601 / ES114) (Vibrio fischeri) protein is Urease accessory protein UreG.